The primary structure comprises 355 residues: 6-aminohexanoate-oligomer endohydrolase (355 aa).

The Nucleophile role is filled by T267.

This sequence belongs to the peptidase S58 family. As to quaternary structure, heterotetramer composed of 4 alpha/beta heterodimers. Post-translationally, expressed as an inactive precursor that is cleaved autocatalytically at Asn266/Thr267 to generate an active enzyme composed of an alpha subunit and a beta subunit.

It carries out the reaction [N-(6-aminohexanoyl)]n + H2O = [N-(6-aminohexanoyl)]n-x + [N-(6-aminohexanoyl)]x.. It functions in the pathway xenobiotic degradation; nylon-6 oligomer degradation. Its function is as follows. Involved in the degradation of nylon-6 oligomers. Degrades cyclic and linear oligomers of 6-aminohexanoate (Ahx) with a degree of polymerization greater than three by an endo-type mode. Cannot use Ahx cyclic dimer or the Ahx linear dimer. This Agromyces sp. (strain KY5R) protein is 6-aminohexanoate-oligomer endohydrolase.